The following is a 159-amino-acid chain: Odorant-binding protein (159 aa).

It belongs to the calycin superfamily. Lipocalin family. In terms of assembly, homodimer.

The protein localises to the secreted. This protein binds a wide variety of chemical odorants. This chain is Odorant-binding protein, found in Bos taurus (Bovine).